The sequence spans 455 residues: Serine--tRNA ligase (455 aa).

An L-serine-binding site is contributed by 252–254; that stretch reads TAE. ATP contacts are provided by residues 283–285 and valine 299; that span reads RKE. L-serine is bound at residue glutamate 306. 370-373 contacts ATP; sequence EVVS. Position 406 (threonine 406) interacts with L-serine.

This sequence belongs to the class-II aminoacyl-tRNA synthetase family. Type-1 seryl-tRNA synthetase subfamily. As to quaternary structure, homodimer. The tRNA molecule binds across the dimer.

It is found in the cytoplasm. It catalyses the reaction tRNA(Ser) + L-serine + ATP = L-seryl-tRNA(Ser) + AMP + diphosphate + H(+). The catalysed reaction is tRNA(Sec) + L-serine + ATP = L-seryl-tRNA(Sec) + AMP + diphosphate + H(+). Its pathway is aminoacyl-tRNA biosynthesis; selenocysteinyl-tRNA(Sec) biosynthesis; L-seryl-tRNA(Sec) from L-serine and tRNA(Sec): step 1/1. In terms of biological role, catalyzes the attachment of serine to tRNA(Ser). Is also able to aminoacylate tRNA(Sec) with serine, to form the misacylated tRNA L-seryl-tRNA(Sec), which will be further converted into selenocysteinyl-tRNA(Sec). The protein is Serine--tRNA ligase of Thermococcus kodakarensis (strain ATCC BAA-918 / JCM 12380 / KOD1) (Pyrococcus kodakaraensis (strain KOD1)).